We begin with the raw amino-acid sequence, 109 residues long: Protein phosphatase 1 regulatory subunit 1C (109 aa).

The tract at residues 25–109 (AEQIRKRRPT…TNEREEQRDH (85 aa)) is disordered. A compositionally biased stretch (basic and acidic residues) spans 45 to 54 (NPPEIDDKRV). Positions 55 to 75 (PNTQGELQNASPKQRKQSVYT) are enriched in polar residues. Residues 100-109 (TNEREEQRDH) show a composition bias toward basic and acidic residues.

The protein belongs to the protein phosphatase inhibitor 1 family.

It is found in the cytoplasm. In terms of biological role, may increase cell susceptibility to TNF-induced apoptosis. This Pongo abelii (Sumatran orangutan) protein is Protein phosphatase 1 regulatory subunit 1C (PPP1R1C).